Reading from the N-terminus, the 295-residue chain is MEAGGGKRAAPEGTNGAAKRARASESSQVGVGSKLKPCTKFFSTSGCPFGSSCHFLHNFPGGYQAAAKMTSHGGTAVAAPPGRMPLGPGAPNGPPTSSVKTRMCNKYNTAEGCKWGSKCHFAHGERELGKPMLLDNSMPHPMGSMPFEAPPMPGPDIVPPSTFGASATAKISVDASLAGGIIGKGGTNTKHISRMTGAKLAIRDNESNPNLKNIELEGTFDQIKHASAMVTELIVRISGNAPPAKNPGRGSHAGGPGSNFKTKLCENFNKGSCTFGDRCHFAHGESELRKPPAAA.

Residues 1–31 form a disordered region; that stretch reads MEAGGGKRAAPEGTNGAAKRARASESSQVGV. C3H1-type zinc fingers lie at residues 32-60 and 98-126; these read GSKLKPCTKFFSTSGCPFGSSCHFLHNFP and SVKTRMCNKYNTAEGCKWGSKCHFAHGER. One can recognise a KH domain in the interval 166–230; it reads SATAKISVDA…DQIKHASAMV (65 aa). The C3H1-type 3 zinc finger occupies 259–286; that stretch reads NFKTKLCENFNKGSCTFGDRCHFAHGES.

The polypeptide is Zinc finger CCCH domain-containing protein 44 (Oryza sativa subsp. japonica (Rice)).